Consider the following 180-residue polypeptide: Oligoribonuclease (180 aa).

The 164-residue stretch at 7-170 (LIWIDLEMTG…DDIRDSINEL (164 aa)) folds into the Exonuclease domain. Tyr128 is an active-site residue.

Belongs to the oligoribonuclease family.

The protein resides in the cytoplasm. Its function is as follows. 3'-to-5' exoribonuclease specific for small oligoribonucleotides. In Marinobacter nauticus (strain ATCC 700491 / DSM 11845 / VT8) (Marinobacter aquaeolei), this protein is Oligoribonuclease.